Reading from the N-terminus, the 279-residue chain is Bifunctional protein FolD 1 (279 aa).

NADP(+) contacts are provided by residues 166–168 (GRS) and serine 191.

The protein belongs to the tetrahydrofolate dehydrogenase/cyclohydrolase family. Homodimer.

It catalyses the reaction (6R)-5,10-methylene-5,6,7,8-tetrahydrofolate + NADP(+) = (6R)-5,10-methenyltetrahydrofolate + NADPH. It carries out the reaction (6R)-5,10-methenyltetrahydrofolate + H2O = (6R)-10-formyltetrahydrofolate + H(+). Its pathway is one-carbon metabolism; tetrahydrofolate interconversion. In terms of biological role, catalyzes the oxidation of 5,10-methylenetetrahydrofolate to 5,10-methenyltetrahydrofolate and then the hydrolysis of 5,10-methenyltetrahydrofolate to 10-formyltetrahydrofolate. In Salinispora arenicola (strain CNS-205), this protein is Bifunctional protein FolD 1.